The following is a 163-amino-acid chain: Ribosome maturation factor RimM (163 aa).

A PRC barrel domain is found at 90–155; sequence VGEYYCKDLV…ADIDLNKKRL (66 aa).

It belongs to the RimM family. As to quaternary structure, binds ribosomal protein uS19.

The protein resides in the cytoplasm. Functionally, an accessory protein needed during the final step in the assembly of 30S ribosomal subunit, possibly for assembly of the head region. Essential for efficient processing of 16S rRNA. May be needed both before and after RbfA during the maturation of 16S rRNA. It has affinity for free ribosomal 30S subunits but not for 70S ribosomes. This Neorickettsia sennetsu (strain ATCC VR-367 / Miyayama) (Ehrlichia sennetsu) protein is Ribosome maturation factor RimM.